A 470-amino-acid polypeptide reads, in one-letter code: Sulfate adenylyltransferase subunit 1 (470 aa).

The 216-residue stretch at 22 to 237 (KEVLRFITCG…LEEVPVKSEE (216 aa)) folds into the tr-type G domain. The segment at 31–38 (GSVDDGKS) is G1. 31 to 38 (GSVDDGKS) provides a ligand contact to GTP. Residues 89–93 (GITID) are G2. Residues 110–113 (DTPG) are G3. GTP is bound by residues 110 to 114 (DTPGH) and 165 to 168 (NKMD). The G4 stretch occupies residues 165 to 168 (NKMD). A G5 region spans residues 202-204 (SAK).

It belongs to the TRAFAC class translation factor GTPase superfamily. Classic translation factor GTPase family. CysN/NodQ subfamily. In terms of assembly, heterodimer composed of CysD, the smaller subunit, and CysN.

It carries out the reaction sulfate + ATP + H(+) = adenosine 5'-phosphosulfate + diphosphate. It functions in the pathway sulfur metabolism; hydrogen sulfide biosynthesis; sulfite from sulfate: step 1/3. With CysD forms the ATP sulfurylase (ATPS) that catalyzes the adenylation of sulfate producing adenosine 5'-phosphosulfate (APS) and diphosphate, the first enzymatic step in sulfur assimilation pathway. APS synthesis involves the formation of a high-energy phosphoric-sulfuric acid anhydride bond driven by GTP hydrolysis by CysN coupled to ATP hydrolysis by CysD. The sequence is that of Sulfate adenylyltransferase subunit 1 from Methylorubrum populi (strain ATCC BAA-705 / NCIMB 13946 / BJ001) (Methylobacterium populi).